The following is a 707-amino-acid chain: U-box domain-containing protein 2 (707 aa).

The 75-residue stretch at 239–313 (RVPSDFRCSL…ASWCETNNVY (75 aa)) folds into the U-box domain. ARM repeat units follow at residues 453–492 (TDNR…NLSI), 494–534 (DNNK…SLSV), 536–575 (EEYK…NLSI), 577–615 (HENK…NLAT), and 617–656 (REGK…QLCT).

It catalyses the reaction S-ubiquitinyl-[E2 ubiquitin-conjugating enzyme]-L-cysteine + [acceptor protein]-L-lysine = [E2 ubiquitin-conjugating enzyme]-L-cysteine + N(6)-ubiquitinyl-[acceptor protein]-L-lysine.. It functions in the pathway protein modification; protein ubiquitination. Functions as an E3 ubiquitin ligase. The sequence is that of U-box domain-containing protein 2 (PUB2) from Arabidopsis thaliana (Mouse-ear cress).